The primary structure comprises 493 residues: Cysteine--tRNA ligase (493 aa).

Zn(2+) is bound at residue cysteine 29. The short motif at 31 to 41 is the 'HIGH' region element; sequence PTVYDFAHIGN. 3 residues coordinate Zn(2+): cysteine 227, histidine 252, and glutamate 256. The short motif at 285–289 is the 'KMSKS' region element; sequence KMSKS. Lysine 288 provides a ligand contact to ATP.

This sequence belongs to the class-I aminoacyl-tRNA synthetase family. Monomer. The cofactor is Zn(2+).

It localises to the cytoplasm. It catalyses the reaction tRNA(Cys) + L-cysteine + ATP = L-cysteinyl-tRNA(Cys) + AMP + diphosphate. The chain is Cysteine--tRNA ligase from Rhodopseudomonas palustris (strain HaA2).